Here is a 474-residue protein sequence, read N- to C-terminus: Glutathione synthetase (474 aa).

Ala-2 bears the N-acetylalanine mark. Arg-125 is a substrate binding site. Residue Glu-144 coordinates ATP. 2 residues coordinate Mg(2+): Glu-144 and Asn-146. Residues Ile-148–Ser-151, Glu-214–Asn-216, Gln-220, and Arg-267–Tyr-270 contribute to the substrate site. ATP is bound by residues Lys-305, Lys-364–Asn-373, Tyr-375, and Met-398–Ile-401. A Mg(2+)-binding site is contributed by Glu-368. Ser-415 is modified (phosphoserine). Glu-425 contributes to the ATP binding site. Arg-450 provides a ligand contact to substrate. ATP contacts are provided by Lys-452 and Asp-458. Position 461–462 (Val-461–Ala-462) interacts with substrate.

Belongs to the eukaryotic GSH synthase family. Homodimer. Mg(2+) serves as cofactor.

The catalysed reaction is gamma-L-glutamyl-L-cysteine + glycine + ATP = glutathione + ADP + phosphate + H(+). It carries out the reaction gamma-L-glutamyl-(2S)-2-aminobutanoate + glycine + ATP = ophthalmate + ADP + phosphate + H(+). It participates in sulfur metabolism; glutathione biosynthesis; glutathione from L-cysteine and L-glutamate: step 2/2. Functionally, catalyzes the production of glutathione from gamma-glutamylcysteine and glycine in an ATP-dependent manner. Glutathione (gamma-glutamylcysteinylglycine, GSH) is the most abundant intracellular thiol in living aerobic cells and is required for numerous processes including the protection of cells against oxidative damage, amino acid transport, the detoxification of foreign compounds, the maintenance of protein sulfhydryl groups in a reduced state and acts as a cofactor for a number of enzymes. Participates in ophthalmate biosynthesis in hepatocytes. This chain is Glutathione synthetase, found in Mus musculus (Mouse).